The sequence spans 425 residues: Threonylcarbamoyladenosine tRNA methylthiotransferase (425 aa).

The Radical SAM core domain occupies 60-295 (RKNELIEVLS…RSYTRYTDER (236 aa)). Cys-74, Cys-78, and Cys-81 together coordinate [4Fe-4S] cluster. The TRAM domain maps to 293 to 355 (DERIGELHRV…KFSMISKPAS (63 aa)). The helical transmembrane segment at 362–382 (PLSLMHLFPLAVFCLVLITLY) threads the bilayer.

The protein belongs to the methylthiotransferase family. CDKAL1 subfamily. [4Fe-4S] cluster serves as cofactor.

The protein resides in the membrane. The catalysed reaction is N(6)-L-threonylcarbamoyladenosine(37) in tRNA + (sulfur carrier)-SH + AH2 + 2 S-adenosyl-L-methionine = 2-methylsulfanyl-N(6)-L-threonylcarbamoyladenosine(37) in tRNA + (sulfur carrier)-H + 5'-deoxyadenosine + L-methionine + A + S-adenosyl-L-homocysteine + 2 H(+). In terms of biological role, catalyzes the methylthiolation of N6-threonylcarbamoyladenosine (t(6)A), leading to the formation of 2-methylthio-N6-threonylcarbamoyladenosine (ms(2)t(6)A) at position 37 in tRNAs that read codons beginning with adenine. This is Threonylcarbamoyladenosine tRNA methylthiotransferase from Caenorhabditis elegans.